The chain runs to 493 residues: Probable cytosol aminopeptidase (493 aa).

Mn(2+)-binding residues include Lys259 and Asp264. Residue Lys271 is part of the active site. 3 residues coordinate Mn(2+): Asp282, Asp341, and Glu343. Arg345 is an active-site residue.

Belongs to the peptidase M17 family. The cofactor is Mn(2+).

It is found in the cytoplasm. It carries out the reaction Release of an N-terminal amino acid, Xaa-|-Yaa-, in which Xaa is preferably Leu, but may be other amino acids including Pro although not Arg or Lys, and Yaa may be Pro. Amino acid amides and methyl esters are also readily hydrolyzed, but rates on arylamides are exceedingly low.. It catalyses the reaction Release of an N-terminal amino acid, preferentially leucine, but not glutamic or aspartic acids.. In terms of biological role, presumably involved in the processing and regular turnover of intracellular proteins. Catalyzes the removal of unsubstituted N-terminal amino acids from various peptides. In Bacillus cytotoxicus (strain DSM 22905 / CIP 110041 / 391-98 / NVH 391-98), this protein is Probable cytosol aminopeptidase.